A 464-amino-acid polypeptide reads, in one-letter code: tRNA-2-methylthio-N(6)-dimethylallyladenosine synthase (464 aa).

The MTTase N-terminal domain occupies 19–135 (GSYWITTFGC…LENLLGKVDL (117 aa)). 6 residues coordinate [4Fe-4S] cluster: C28, C64, C98, C170, C174, and C177. Residues 156-393 (RESSICGWVN…NELVETTSKQ (238 aa)) enclose the Radical SAM core domain. The region spanning 396-464 (ERYLDSIESV…PFSLTGILCL (69 aa)) is the TRAM domain.

This sequence belongs to the methylthiotransferase family. MiaB subfamily. As to quaternary structure, monomer. Requires [4Fe-4S] cluster as cofactor.

Its subcellular location is the cytoplasm. The catalysed reaction is N(6)-dimethylallyladenosine(37) in tRNA + (sulfur carrier)-SH + AH2 + 2 S-adenosyl-L-methionine = 2-methylsulfanyl-N(6)-dimethylallyladenosine(37) in tRNA + (sulfur carrier)-H + 5'-deoxyadenosine + L-methionine + A + S-adenosyl-L-homocysteine + 2 H(+). Catalyzes the methylthiolation of N6-(dimethylallyl)adenosine (i(6)A), leading to the formation of 2-methylthio-N6-(dimethylallyl)adenosine (ms(2)i(6)A) at position 37 in tRNAs that read codons beginning with uridine. In Prochlorococcus marinus (strain MIT 9215), this protein is tRNA-2-methylthio-N(6)-dimethylallyladenosine synthase.